Here is a 509-residue protein sequence, read N- to C-terminus: Hyaluronidase PH-20 (509 aa).

An N-terminal signal peptide occupies residues 1–35 (MGVLKFKHIFFRSFVKSSGVSQIVFTFLLIPCCLT). Cystine bridges form between cysteine 60–cysteine 351 and cysteine 224–cysteine 238. Asparagine 82 carries an N-linked (GlcNAc...) asparagine glycan. The Proton donor role is filled by glutamate 148. Residues asparagine 166, asparagine 235, asparagine 254, and asparagine 368 are each glycosylated (N-linked (GlcNAc...) asparagine). Disulfide bonds link cysteine 376/cysteine 387, cysteine 381/cysteine 435, and cysteine 437/cysteine 464. Asparagine 393 carries an N-linked (GlcNAc...) asparagine glycan. A lipid anchor (GPI-anchor amidated serine) is attached at serine 490. Residues 491–509 (ATMFIVSILFLIISSVASL) constitute a propeptide, removed in mature form.

The protein belongs to the glycosyl hydrolase 56 family. In terms of processing, N-glycosylated. Testis.

It localises to the cell membrane. The catalysed reaction is Random hydrolysis of (1-&gt;4)-linkages between N-acetyl-beta-D-glucosamine and D-glucuronate residues in hyaluronate.. Functionally, involved in sperm-egg adhesion. Upon fertilization sperm must first penetrate a layer of cumulus cells that surrounds the egg before reaching the zona pellucida. The cumulus cells are embedded in a matrix containing hyaluronic acid which is formed prior to ovulation. This protein aids in penetrating the layer of cumulus cells by digesting hyaluronic acid. This is Hyaluronidase PH-20 (SPAM1) from Homo sapiens (Human).